A 574-amino-acid polypeptide reads, in one-letter code: MTWRCGCYGLVLLVLGVMGQKLPTRDEGLFQMQIRDKAQFHDSSVMPDGAEISGYLFRDTPKRYYFVVEEDNTPLLVTVTPCDAPLEWRLTLQELPEDRSGEGSGEPEPLEQQKQQVTANEGTELFTYKGNDVESFISSSSPSGLYQLEIISTEKDSNFKIYSTTTPESDQPYPELPYDPRVDVTALGRTTVTLAWKPTPTGSVMGQPIQYCVVINKEHNFKSLCAAEAKMSLDDAFMIAPKPGRDFSPFDFAYFGFVPSENDFHKDRFLTTNRALSNKMSRAYIPKPKVADIQKICIGNKNIFTITDLKPDTQYYFDVFAVNTGTNMSTAYVGTFARTKEEAKQKTVELKDGKVTDVFVKRKGSKFLRFAPVSSHQRVTLFVHACLDAVQVQVRRDGKLVLSQNVEGVRQFQLRGKPKAKYLIRLRGSRKGASTLKVLASTRAGGKQPFPALPEDTRIKAFDKLRTCSSVTVAWLGTQERNKYCVYRREVSESYGEEHRRREQNQCSGPESRRKSEKVLCKYFYSANLQKAVTTETITGLEAGKSYLLDVYVVGHSGHSVKYQSKLVKTRKYC.

Positions 1 to 19 are cleaved as a signal peptide; that stretch reads MTWRCGCYGLVLLVLGVMG. The interval 97–118 is disordered; sequence EDRSGEGSGEPEPLEQQKQQVT. Fibronectin type-III domains are found at residues 174–329 and 451–560; these read PELP…TNMS and PALP…SGHS. Asparagine 327 carries an N-linked (GlcNAc...) asparagine glycan.

The protein localises to the secreted. Secretory protein that plays a role in various cellular processes. Acts as a chemorepellent acting on gonadotropin-releasing hormone (GnRH) expressing neurons regulating their migration to the hypothalamus. Also promotes neuron migration, growth and survival as well as neurite outgrowth and is involved in the development of the olfactory system. May also act through the regulation of growth factors activity and downstream signaling. Also regulates extracellular matrix assembly and cell adhesiveness. Promotes endothelial cell survival, vessel formation and plays an important role in the process of revascularization through NOS3-dependent mechanisms. This chain is Protein NDNF (ndnf), found in Danio rerio (Zebrafish).